Consider the following 1337-residue polypeptide: DNA mismatch repair protein Msh6 (1337 aa).

The PWWP domain maps to 68–130; the sequence is PGDLVWAKME…IKYLRPYKGS (63 aa). The segment at 170-310 is disordered; it reads AVCSEPSDTE…SEAPKRAAPV (141 aa). Acidic residues predominate over residues 176–187; sequence SDTEEAEEEEME. Basic and acidic residues predominate over residues 226 to 248; that stretch reads VLDSDSDRDGSDVEFKPDVKEAS. Acidic residues predominate over residues 257–272; it reads DENEATDVETDEESIE. Positions 279-292 are enriched in basic residues; sequence PSKRKRGNVSKPSK. Positions 294-305 are enriched in basic and acidic residues; it reads SSLENEHSEAPK. 1111–1118 lines the ATP pocket; the sequence is GPNMGGKS.

It belongs to the DNA mismatch repair MutS family.

It is found in the nucleus. In terms of biological role, component of the post-replicative DNA mismatch repair system (MMR). Involved in B cell growth by positively regulating B cell proliferation and controlling replication efficiency. Controls cell cycle to prevent re-replication and defects in DNA damage-induced G2 checkpoint. Doesn't seem to counteract or control the immunoglobulin gene conversion (Ig GC) and to contribute to guanine/uracil mismatch repair. This chain is DNA mismatch repair protein Msh6, found in Gallus gallus (Chicken).